The chain runs to 350 residues: Hydroxymethylglutaryl-CoA synthase (350 aa).

D30 contributes to the (3S)-3-hydroxy-3-methylglutaryl-CoA binding site. E82 functions as the Proton donor/acceptor in the catalytic mechanism. C114, S155, T203, and H236 together coordinate (3S)-3-hydroxy-3-methylglutaryl-CoA. The active-site Acyl-thioester intermediate is C114. The active-site Proton donor/acceptor is H236. R241 contributes to the CoA binding site. R245, N268, and S298 together coordinate (3S)-3-hydroxy-3-methylglutaryl-CoA.

This sequence belongs to the thiolase-like superfamily. Archaeal HMG-CoA synthase family. Interacts with acetoacetyl-CoA thiolase that catalyzes the precedent step in the pathway and with a DUF35 protein. The acetoacetyl-CoA thiolase/HMG-CoA synthase complex channels the intermediate via a fused CoA-binding site, which allows for efficient coupling of the endergonic thiolase reaction with the exergonic HMGCS reaction.

It carries out the reaction acetoacetyl-CoA + acetyl-CoA + H2O = (3S)-3-hydroxy-3-methylglutaryl-CoA + CoA + H(+). It participates in metabolic intermediate biosynthesis; (R)-mevalonate biosynthesis; (R)-mevalonate from acetyl-CoA: step 2/3. Its function is as follows. Catalyzes the condensation of acetyl-CoA with acetoacetyl-CoA to form 3-hydroxy-3-methylglutaryl-CoA (HMG-CoA). Functions in the mevalonate (MVA) pathway leading to isopentenyl diphosphate (IPP), a key precursor for the biosynthesis of isoprenoid compounds that are building blocks of archaeal membrane lipids. The protein is Hydroxymethylglutaryl-CoA synthase of Pyrobaculum aerophilum (strain ATCC 51768 / DSM 7523 / JCM 9630 / CIP 104966 / NBRC 100827 / IM2).